Here is a 339-residue protein sequence, read N- to C-terminus: Sphingomyelinase D (339 aa).

The signal sequence occupies residues 1 to 21; sequence MVSLLRLCSFLLAAGSILVQG. Residue H60 is part of the active site. Positions 80, 82, and 128 each coordinate Mg(2+). The SMD-tail signature appears at 309–316; the sequence is ATVDDNPW. Residues 313 to 339 form a disordered region; it reads DNPWSSMSKKGSSKSSWVKGEVPSIAH. Residues 317-328 show a composition bias toward low complexity; that stretch reads SSMSKKGSSKSS.

It belongs to the sphingomyelinase D/phospholipase D family. Mg(2+) serves as cofactor.

The protein localises to the secreted. It catalyses the reaction a sphingomyelin + H2O = an N-acylsphing-4-enine 1-phosphate + choline + H(+). Its function is as follows. Catalyzes the hydrolysis of sphingomyelin. Sphingomyelinases D are produced by some spider in their venoms, but also by arthropods such as ticks, or pathogenic bacteria and fungi. They might play a role in pathogenicity through different mechanisms, such as membrane destabilization and host cell penetration, but also pulmonary inflammation and cutaneous lesions. This chain is Sphingomyelinase D, found in Arthroderma benhamiae (strain ATCC MYA-4681 / CBS 112371) (Trichophyton mentagrophytes).